The sequence spans 608 residues: RAS guanyl-releasing protein 2 (608 aa).

The N-terminal Ras-GEF domain occupies 4–126; the sequence is TLDLDKGCTV…SLIDIENVPT (123 aa). Phosphoserine occurs at positions 116, 117, and 147. Positions 154–387 constitute a Ras-GEF domain; that stretch reads EPLELAAHLT…YQLSLQREPR (234 aa). The disordered stretch occupies residues 382-407; the sequence is LQREPRSKSSPTSPTTCTPPPRPPVL. EF-hand domains follow at residues 426–461 and 463–490; these read HIEK…FPYL and AFGD…SSSM. Residues Asp-439, Asp-441, Asp-443, His-445, Glu-450, Asp-468, Asn-470, Asp-472, Cys-474, and Glu-479 each coordinate Ca(2+). Residues 498-548 form a Phorbol-ester/DAG-type zinc finger; that stretch reads VHNFHESNSLRPVACRHCKALILGIYKQGLKCRACGVNCHKQCKDRLSVEC. Ser-554 and Ser-575 each carry phosphoserine. The segment at 556–591 is disordered; the sequence is SLEGSAPSPSPTHTHHRAFSFSLPRPGRRGSRPPEI.

The protein belongs to the RASGRP family. In terms of assembly, forms a signaling complex with RAP1 and BRAF. Interacts with RAP1. Interacts with F-actin.

The protein resides in the cytoplasm. The protein localises to the cytosol. Its subcellular location is the cell membrane. It localises to the synapse. It is found in the synaptosome. The protein resides in the cell projection. The protein localises to the ruffle membrane. In terms of biological role, functions as a calcium- and DAG-regulated nucleotide exchange factor specifically activating Rap through the exchange of bound GDP for GTP. May also activate other GTPases such as RRAS, RRAS2, NRAS, KRAS but not HRAS. Functions in aggregation of platelets and adhesion of T-lymphocytes and neutrophils probably through inside-out integrin activation. May function in the muscarinic acetylcholine receptor M1/CHRM1 signaling pathway. This is RAS guanyl-releasing protein 2 (RASGRP2) from Bos taurus (Bovine).